We begin with the raw amino-acid sequence, 394 residues long: Flavohemoprotein (394 aa).

A Globin domain is found at 1–136 (MLSENTINIV…LANVFIQREE (136 aa)). Residue His85 participates in heme b binding. Active-site charge relay system residues include Tyr95 and Glu135. The segment at 147–394 (GGWRGLREFE…YECFGPHKVV (248 aa)) is reductase. The FAD-binding FR-type domain maps to 150 to 255 (RGLREFELVE…AAPAGDFFLD (106 aa)). Residues Tyr188 and 204-207 (RQYS) contribute to the FAD site. 268 to 273 (GVGLTP) serves as a coordination point for NADP(+). 387 to 390 (CFGP) contributes to the FAD binding site.

Belongs to the globin family. Two-domain flavohemoproteins subfamily. It in the C-terminal section; belongs to the flavoprotein pyridine nucleotide cytochrome reductase family. It depends on heme b as a cofactor. FAD is required as a cofactor.

It carries out the reaction 2 nitric oxide + NADPH + 2 O2 = 2 nitrate + NADP(+) + H(+). The enzyme catalyses 2 nitric oxide + NADH + 2 O2 = 2 nitrate + NAD(+) + H(+). In terms of biological role, is involved in NO detoxification in an aerobic process, termed nitric oxide dioxygenase (NOD) reaction that utilizes O(2) and NAD(P)H to convert NO to nitrate, which protects the bacterium from various noxious nitrogen compounds. Therefore, plays a central role in the inducible response to nitrosative stress. This Vibrio vulnificus (strain YJ016) protein is Flavohemoprotein.